The primary structure comprises 189 residues: Potassium-transporting ATPase KdpC subunit (189 aa).

A helical transmembrane segment spans residues 11–31 (LFVLLTVITGVLYPVFVTGLA).

The protein belongs to the KdpC family. As to quaternary structure, the system is composed of three essential subunits: KdpA, KdpB and KdpC.

The protein localises to the cell inner membrane. In terms of biological role, part of the high-affinity ATP-driven potassium transport (or Kdp) system, which catalyzes the hydrolysis of ATP coupled with the electrogenic transport of potassium into the cytoplasm. This subunit acts as a catalytic chaperone that increases the ATP-binding affinity of the ATP-hydrolyzing subunit KdpB by the formation of a transient KdpB/KdpC/ATP ternary complex. The protein is Potassium-transporting ATPase KdpC subunit of Polynucleobacter asymbioticus (strain DSM 18221 / CIP 109841 / QLW-P1DMWA-1) (Polynucleobacter necessarius subsp. asymbioticus).